The chain runs to 263 residues: Virulence plasmid protein pGP6-D-related protein (263 aa).

This sequence belongs to the UPF0137 (pGP6-D) family.

The chain is Virulence plasmid protein pGP6-D-related protein from Chlamydia trachomatis serovar D (strain ATCC VR-885 / DSM 19411 / UW-3/Cx).